Reading from the N-terminus, the 447-residue chain is N-succinylarginine dihydrolase (447 aa).

Substrate is bound by residues 19–28 (AGLSFGNEAS), Asn-110, and 137–138 (HR). The active site involves Glu-174. Substrate is bound at residue Arg-212. Residue His-248 is part of the active site. Asp-250 and Asn-359 together coordinate substrate. Cys-365 functions as the Nucleophile in the catalytic mechanism.

The protein belongs to the succinylarginine dihydrolase family. In terms of assembly, homodimer.

It catalyses the reaction N(2)-succinyl-L-arginine + 2 H2O + 2 H(+) = N(2)-succinyl-L-ornithine + 2 NH4(+) + CO2. The protein operates within amino-acid degradation; L-arginine degradation via AST pathway; L-glutamate and succinate from L-arginine: step 2/5. Its function is as follows. Catalyzes the hydrolysis of N(2)-succinylarginine into N(2)-succinylornithine, ammonia and CO(2). The protein is N-succinylarginine dihydrolase of Shigella boydii serotype 4 (strain Sb227).